The primary structure comprises 147 residues: Anti-sigma F factor (147 aa).

It belongs to the anti-sigma-factor family.

It carries out the reaction L-seryl-[protein] + ATP = O-phospho-L-seryl-[protein] + ADP + H(+). The catalysed reaction is L-threonyl-[protein] + ATP = O-phospho-L-threonyl-[protein] + ADP + H(+). Binds to sigma F and blocks its ability to form an RNA polymerase holoenzyme (E-sigma F). Phosphorylates SpoIIAA on a serine residue. This phosphorylation may enable SpoIIAA to act as an anti-anti-sigma factor that counteracts SpoIIAB and thus releases sigma F from inhibition. In Heyndrickxia coagulans (Weizmannia coagulans), this protein is Anti-sigma F factor.